The sequence spans 539 residues: CTP synthase (539 aa).

Residues 1–269 (MSATKYIFVT…DERVLSKLKL (269 aa)) form an amidoligase domain region. Ser-15 is a binding site for CTP. Ser-15 provides a ligand contact to UTP. 16–21 (SLGKGI) is an ATP binding site. Tyr-56 serves as a coordination point for L-glutamine. Asp-73 provides a ligand contact to ATP. The Mg(2+) site is built by Asp-73 and Glu-143. CTP contacts are provided by residues 150-152 (DIE), 190-195 (KTKPTQ), and Lys-226. UTP is bound by residues 190 to 195 (KTKPTQ) and Lys-226. The 243-residue stretch at 295–537 (NIALVGKYVE…VKAANDFAKG (243 aa)) folds into the Glutamine amidotransferase type-1 domain. Residue Gly-357 coordinates L-glutamine. Cys-384 functions as the Nucleophile; for glutamine hydrolysis in the catalytic mechanism. L-glutamine contacts are provided by residues 385 to 388 (LGMQ), Glu-408, and Arg-465. Active-site residues include His-510 and Glu-512.

This sequence belongs to the CTP synthase family. As to quaternary structure, homotetramer.

The enzyme catalyses UTP + L-glutamine + ATP + H2O = CTP + L-glutamate + ADP + phosphate + 2 H(+). It catalyses the reaction L-glutamine + H2O = L-glutamate + NH4(+). It carries out the reaction UTP + NH4(+) + ATP = CTP + ADP + phosphate + 2 H(+). Its pathway is pyrimidine metabolism; CTP biosynthesis via de novo pathway; CTP from UDP: step 2/2. With respect to regulation, allosterically activated by GTP, when glutamine is the substrate; GTP has no effect on the reaction when ammonia is the substrate. The allosteric effector GTP functions by stabilizing the protein conformation that binds the tetrahedral intermediate(s) formed during glutamine hydrolysis. Inhibited by the product CTP, via allosteric rather than competitive inhibition. Its function is as follows. Catalyzes the ATP-dependent amination of UTP to CTP with either L-glutamine or ammonia as the source of nitrogen. Regulates intracellular CTP levels through interactions with the four ribonucleotide triphosphates. This Cytophaga hutchinsonii (strain ATCC 33406 / DSM 1761 / CIP 103989 / NBRC 15051 / NCIMB 9469 / D465) protein is CTP synthase.